The primary structure comprises 90 residues: UPF0297 protein ABC1593 (90 aa).

Belongs to the UPF0297 family.

The chain is UPF0297 protein ABC1593 from Shouchella clausii (strain KSM-K16) (Alkalihalobacillus clausii).